Reading from the N-terminus, the 293-residue chain is Bifunctional protein FolD (293 aa).

NADP(+)-binding positions include 166-168 (GAS) and isoleucine 232.

The protein belongs to the tetrahydrofolate dehydrogenase/cyclohydrolase family. In terms of assembly, homodimer.

It catalyses the reaction (6R)-5,10-methylene-5,6,7,8-tetrahydrofolate + NADP(+) = (6R)-5,10-methenyltetrahydrofolate + NADPH. It carries out the reaction (6R)-5,10-methenyltetrahydrofolate + H2O = (6R)-10-formyltetrahydrofolate + H(+). Its pathway is one-carbon metabolism; tetrahydrofolate interconversion. Catalyzes the oxidation of 5,10-methylenetetrahydrofolate to 5,10-methenyltetrahydrofolate and then the hydrolysis of 5,10-methenyltetrahydrofolate to 10-formyltetrahydrofolate. This chain is Bifunctional protein FolD, found in Yersinia enterocolitica serotype O:8 / biotype 1B (strain NCTC 13174 / 8081).